Here is a 61-residue protein sequence, read N- to C-terminus: Small ribosomal subunit protein uS14 (61 aa).

4 residues coordinate Zn(2+): Cys24, Cys27, Cys40, and Cys43.

This sequence belongs to the universal ribosomal protein uS14 family. Zinc-binding uS14 subfamily. Part of the 30S ribosomal subunit. Contacts proteins S3 and S10. Zn(2+) is required as a cofactor.

Its function is as follows. Binds 16S rRNA, required for the assembly of 30S particles and may also be responsible for determining the conformation of the 16S rRNA at the A site. The sequence is that of Small ribosomal subunit protein uS14 from Dehalococcoides mccartyi (strain ATCC BAA-2266 / KCTC 15142 / 195) (Dehalococcoides ethenogenes (strain 195)).